We begin with the raw amino-acid sequence, 259 residues long: Ribonuclease PH (259 aa).

Residues Arg-88 and 126 to 128 (GTR) each bind phosphate.

This sequence belongs to the RNase PH family. As to quaternary structure, homohexameric ring arranged as a trimer of dimers.

It carries out the reaction tRNA(n+1) + phosphate = tRNA(n) + a ribonucleoside 5'-diphosphate. Phosphorolytic 3'-5' exoribonuclease that plays an important role in tRNA 3'-end maturation. Removes nucleotide residues following the 3'-CCA terminus of tRNAs; can also add nucleotides to the ends of RNA molecules by using nucleoside diphosphates as substrates, but this may not be physiologically important. Probably plays a role in initiation of 16S rRNA degradation (leading to ribosome degradation) during starvation. In Mycobacterium ulcerans (strain Agy99), this protein is Ribonuclease PH.